The sequence spans 313 residues: Olfactory receptor 51A4 (313 aa).

At 1-27 (MSIINTSYVEITTFFLVGMPGLEYAHI) the chain is on the extracellular side. Asn-5 is a glycosylation site (N-linked (GlcNAc...) asparagine). The chain crosses the membrane as a helical span at residues 28–48 (WISIPICSMYLIAILGNGTIL). The Cytoplasmic portion of the chain corresponds to 49-56 (FIIKTEPS). Residues 57 to 77 (LHEPMYYFLSMLAMSDLGLSL) form a helical membrane-spanning segment. The Extracellular portion of the chain corresponds to 78-101 (SSLPTVLSIFLFNAPEISSNACFA). Cys-99 and Cys-191 are joined by a disulfide. Residues 102–122 (QEFFIHGFSVLESSVLLIMSF) form a helical membrane-spanning segment. The Cytoplasmic portion of the chain corresponds to 123-141 (DRFLAIHNPLRYTSILTTV). A helical membrane pass occupies residues 142–162 (RVAQIGIVFSFKSMLLVLPFP). At 163 to 198 (FTLRNLRYCKKNQLSHSYCLHQDVMKLACSDNRIDV) the chain is on the extracellular side. Residues 199–218 (IYGFFGALCLMVDFILIAVS) traverse the membrane as a helical segment. The Cytoplasmic segment spans residues 219–238 (YTLILKTVLGIASKKEQLKA). The chain crosses the membrane as a helical span at residues 239–259 (LNTCVSHICAVIIFYLPIINL). Residues 260-274 (AVVHRFARHVSPLIN) lie on the Extracellular side of the membrane. Residues 275–295 (VLMANVLLLVPPLTNPIVYCV) form a helical membrane-spanning segment. Residues 296 to 313 (KTKQIRVRVVAKLCQRKI) lie on the Cytoplasmic side of the membrane.

It belongs to the G-protein coupled receptor 1 family.

Its subcellular location is the cell membrane. Functionally, odorant receptor. This chain is Olfactory receptor 51A4 (OR51A4), found in Homo sapiens (Human).